Reading from the N-terminus, the 526-residue chain is MQLTLWTYEGPPHVGAMRIAASMKGVHCVLHAPQGDTYADLLFTMIERRPGRPPVSYSTFNARHLGRDTAELVRETVTAAYERYQPEALLVGDSCTAELLQDQPGDLAQGMDLPVPVIGLELSAYSRKEGYGASEAFYQLVRGLLETNGASAGAQPDASRAPRANLLGPTSLGFRCRDDVQEVTRLLESVGVEVNVVAPLGASPEDLRRIPEADFNVCLYPEVARSTCEWLQRRFGQPTVTTVPLGLGATRDFLAEVGRVTGLDVSQGVADANARMAWYSRSVDSNYLTGKRVFIFGDGTHAVAAARIASEELGFEVVGLGTYAREEAREVRRAAKAYGVEPLITDDYLEVERAATEASPELVLGTQMERHIAKRLGVPCAVISAPVHVQDFPARYAPNMGLEGANVIFDTWVHPLMMGLEEHLLGMFKEDFEFTADAPSHLEAGAAPSPGGAAREEGQAETAVAVAESEEGAEVRWTPEAEAELKKIPFFVRGKARRNTERFAADRGIATITVETIYDAKAHFSR.

D36 lines the [4Fe-4S] cluster pocket. Catalysis depends on D284, which acts as the Proton donor. Position 419-420 (419-420) interacts with substrate; that stretch reads GL.

It belongs to the ChlB/BchB/BchZ family. In terms of assembly, protochlorophyllide reductase is composed of three subunits; BchL, BchN and BchB. Forms a heterotetramer of two BchB and two BchN subunits. It depends on [4Fe-4S] cluster as a cofactor.

It catalyses the reaction chlorophyllide a + oxidized 2[4Fe-4S]-[ferredoxin] + 2 ADP + 2 phosphate = protochlorophyllide a + reduced 2[4Fe-4S]-[ferredoxin] + 2 ATP + 2 H2O. Its pathway is porphyrin-containing compound metabolism; bacteriochlorophyll biosynthesis (light-independent). In terms of biological role, component of the dark-operative protochlorophyllide reductase (DPOR) that uses Mg-ATP and reduced ferredoxin to reduce ring D of protochlorophyllide (Pchlide) to form chlorophyllide a (Chlide). This reaction is light-independent. The NB-protein (BchN-BchB) is the catalytic component of the complex. In Halorhodospira halophila (strain DSM 244 / SL1) (Ectothiorhodospira halophila (strain DSM 244 / SL1)), this protein is Light-independent protochlorophyllide reductase subunit B.